The primary structure comprises 72 residues: Translation initiation factor IF-1 (72 aa).

The 72-residue stretch at 1–72 (MAKDDVIQMQ…SRARIVFRAK (72 aa)) folds into the S1-like domain.

The protein belongs to the IF-1 family. In terms of assembly, component of the 30S ribosomal translation pre-initiation complex which assembles on the 30S ribosome in the order IF-2 and IF-3, IF-1 and N-formylmethionyl-tRNA(fMet); mRNA recruitment can occur at any time during PIC assembly.

It localises to the cytoplasm. One of the essential components for the initiation of protein synthesis. Stabilizes the binding of IF-2 and IF-3 on the 30S subunit to which N-formylmethionyl-tRNA(fMet) subsequently binds. Helps modulate mRNA selection, yielding the 30S pre-initiation complex (PIC). Upon addition of the 50S ribosomal subunit IF-1, IF-2 and IF-3 are released leaving the mature 70S translation initiation complex. In Burkholderia mallei (strain NCTC 10247), this protein is Translation initiation factor IF-1.